The chain runs to 851 residues: Transcriptional regulator RFX1 (851 aa).

Polar residues-rich tracts occupy residues 1–11 (MSSDQTPQNRN) and 20–34 (PRLQ…STGP). 3 disordered regions span residues 1-121 (MSSD…EPHP), 134-170 (QSQF…PQTY), and 195-230 (HEAS…TGEN). The span at 38–53 (QQRERSQEQESDHEHQ) shows a compositional bias: basic and acidic residues. A compositionally biased stretch (low complexity) spans 54–84 (QAQQHLHQFQQSNLTPSTTAFPSSTSIPTFS). Residues 85 to 114 (KQDQGYHNQFSSPQSSYRKIGNFAQSSNAP) show a composition bias toward polar residues. The span at 141 to 170 (YSSPYIGQSQSQSQSQSQAQPQPHPQPQTY) shows a compositional bias: low complexity. A compositionally biased stretch (polar residues) spans 199-211 (SADNDSATNITTP). Residues 282-357 (GMVWLLNSCD…YHYCGIKLTG (76 aa)) constitute a DNA-binding region (RFX-type winged-helix). 2 disordered regions span residues 368-411 (YQQK…SVSY) and 783-806 (PPSL…TGTQ). The segment covering 384 to 393 (AQVGSSTSSA) has biased composition (polar residues). Low complexity predominate over residues 783–797 (PPSLSSLPQTQQQNP).

This sequence belongs to the RFX family.

The protein resides in the nucleus. Functionally, transcription factor involved in DNA damage responses, morphogenesis, and virulence. The chain is Transcriptional regulator RFX1 (RFX1) from Candida albicans (strain SC5314 / ATCC MYA-2876) (Yeast).